Here is a 316-residue protein sequence, read N- to C-terminus: Homoserine kinase (316 aa).

97-107 (PHSRGLGSSAA) provides a ligand contact to ATP.

It belongs to the GHMP kinase family. Homoserine kinase subfamily.

It is found in the cytoplasm. The catalysed reaction is L-homoserine + ATP = O-phospho-L-homoserine + ADP + H(+). It functions in the pathway amino-acid biosynthesis; L-threonine biosynthesis; L-threonine from L-aspartate: step 4/5. Catalyzes the ATP-dependent phosphorylation of L-homoserine to L-homoserine phosphate. In Mycobacterium tuberculosis (strain ATCC 25618 / H37Rv), this protein is Homoserine kinase.